The primary structure comprises 247 residues: tRNA pseudouridine synthase A (247 aa).

Aspartate 53 serves as the catalytic Nucleophile. Tyrosine 111 is a substrate binding site.

This sequence belongs to the tRNA pseudouridine synthase TruA family. Homodimer.

The enzyme catalyses uridine(38/39/40) in tRNA = pseudouridine(38/39/40) in tRNA. Functionally, formation of pseudouridine at positions 38, 39 and 40 in the anticodon stem and loop of transfer RNAs. The protein is tRNA pseudouridine synthase A of Lacticaseibacillus casei (strain BL23) (Lactobacillus casei).